Consider the following 156-residue polypeptide: Ribosome maturation factor RimP (156 aa).

Belongs to the RimP family.

It is found in the cytoplasm. Its function is as follows. Required for maturation of 30S ribosomal subunits. This chain is Ribosome maturation factor RimP, found in Dictyoglomus turgidum (strain DSM 6724 / Z-1310).